A 289-amino-acid polypeptide reads, in one-letter code: Glycine--tRNA ligase alpha subunit (289 aa).

This sequence belongs to the class-II aminoacyl-tRNA synthetase family. Tetramer of two alpha and two beta subunits.

The protein localises to the cytoplasm. It carries out the reaction tRNA(Gly) + glycine + ATP = glycyl-tRNA(Gly) + AMP + diphosphate. In Rickettsia felis (strain ATCC VR-1525 / URRWXCal2) (Rickettsia azadi), this protein is Glycine--tRNA ligase alpha subunit.